The following is a 444-amino-acid chain: Phosphoglucosamine mutase (444 aa).

Ser101 serves as the catalytic Phosphoserine intermediate. Residues Ser101, Asp240, Asp242, and Asp244 each coordinate Mg(2+). A Phosphoserine modification is found at Ser101.

This sequence belongs to the phosphohexose mutase family. The cofactor is Mg(2+). Activated by phosphorylation.

It carries out the reaction alpha-D-glucosamine 1-phosphate = D-glucosamine 6-phosphate. Functionally, catalyzes the conversion of glucosamine-6-phosphate to glucosamine-1-phosphate. The chain is Phosphoglucosamine mutase from Photobacterium profundum (strain SS9).